A 264-amino-acid polypeptide reads, in one-letter code: MKVYHDLMRHVLEQGHKKEDRTGTGTLSVFGYQMRFDLSEGFPLLTTKKVHLKSIIHELLWFLQGSTNIAYLKENGVTIWDEWADAEGNLGPVYGYQWRNWPKPDGGHIDQISEVIAAIKRNPDSRRLIVSAWNVADVDKMKLPPCHAFFQFYVADGKLSCQLYQRSADIFLGVPFNIASYALLTMMVAQVCDLKLGDFVHTLGDAHIYLNHLEQVKEQLSREPYPLPVMRINPEVKDIFAFRFEDFTLENYQSHPAIKAPVAV.

Arg-21 contributes to the dUMP binding site. His-51 is a binding site for (6R)-5,10-methylene-5,6,7,8-tetrahydrofolate. Residue 126-127 (RR) coordinates dUMP. Cys-146 acts as the Nucleophile in catalysis. Residues 166-169 (RSAD), Asn-177, and 207-209 (HIY) contribute to the dUMP site. Asp-169 contributes to the (6R)-5,10-methylene-5,6,7,8-tetrahydrofolate binding site. Ala-263 provides a ligand contact to (6R)-5,10-methylene-5,6,7,8-tetrahydrofolate.

It belongs to the thymidylate synthase family. Bacterial-type ThyA subfamily. In terms of assembly, homodimer.

It is found in the cytoplasm. It catalyses the reaction dUMP + (6R)-5,10-methylene-5,6,7,8-tetrahydrofolate = 7,8-dihydrofolate + dTMP. Its pathway is pyrimidine metabolism; dTTP biosynthesis. In terms of biological role, catalyzes the reductive methylation of 2'-deoxyuridine-5'-monophosphate (dUMP) to 2'-deoxythymidine-5'-monophosphate (dTMP) while utilizing 5,10-methylenetetrahydrofolate (mTHF) as the methyl donor and reductant in the reaction, yielding dihydrofolate (DHF) as a by-product. This enzymatic reaction provides an intracellular de novo source of dTMP, an essential precursor for DNA biosynthesis. This Methylobacillus flagellatus (strain ATCC 51484 / DSM 6875 / VKM B-1610 / KT) protein is Thymidylate synthase.